We begin with the raw amino-acid sequence, 238 residues long: Orotidine 5'-phosphate decarboxylase (238 aa).

Residues Asp-10, Lys-32, Asp-59 to Thr-68, Thr-122, Arg-184, Gln-193, Gly-213, and Arg-214 each bind substrate. Lys-61 acts as the Proton donor in catalysis.

Belongs to the OMP decarboxylase family. Type 1 subfamily. Homodimer.

The enzyme catalyses orotidine 5'-phosphate + H(+) = UMP + CO2. The protein operates within pyrimidine metabolism; UMP biosynthesis via de novo pathway; UMP from orotate: step 2/2. Functionally, catalyzes the decarboxylation of orotidine 5'-monophosphate (OMP) to uridine 5'-monophosphate (UMP). The protein is Orotidine 5'-phosphate decarboxylase of Bacillus mycoides (strain KBAB4) (Bacillus weihenstephanensis).